We begin with the raw amino-acid sequence, 508 residues long: MGLPWYRVHTVVLNDPGRLLSVHIMHTALVSGWAGSMALYELAVFDPSDPVLDPMWRQGMFVIPFMTRLGITNSWGGWSISGGTVTNPGIWSYEGVAGAHIVFSGLCFLAAIWHWVYWDLEIFCDERTGKPSLDLPKIFGIHLFLAGVACFGFGAFHVTGLYGPGIWVSDPYGLTGKVQAVNPAWGAEGFDPFVPGGIASHHIAAGTLGILAGLFHLSVRPPQRLYKGLRMGNIETVLSSSIAAVFFAAFVVAGTMWYGSATTPIELFGPTRYQWDQGYFQQEIYRRVSDGLAENLSLSEAWSKIPEKLAFYDYIGNNPAKGGLFRAGSMDNGDGIAVGWLGHPIFRDKEGRELFVRRMPTFFETFPVVLVDEEGIVRADVPFRRAESKYSVEQVGVTVEFYGGELNGVSYSDPATVKKYARRSQLGEIFELDRATLKSDGVFRSSPRGWFTFGHATFALLFFFGHIWHGARTLFRDVFAGIDPDLDAQVEFGTFQKVGDPTTRRQPV.

A run of 6 helical transmembrane segments spans residues 21–36 (SVHI…WAGS), 101–115 (IVFS…IWHW), 140–156 (GIHL…FGAF), 203–218 (IAAG…FHLS), 237–252 (VLSS…AFVV), and 457–472 (TFAL…HGAR).

It belongs to the PsbB/PsbC family. PsbB subfamily. PSII is composed of 1 copy each of membrane proteins PsbA, PsbB, PsbC, PsbD, PsbE, PsbF, PsbH, PsbI, PsbJ, PsbK, PsbL, PsbM, PsbT, PsbX, PsbY, PsbZ, Psb30/Ycf12, at least 3 peripheral proteins of the oxygen-evolving complex and a large number of cofactors. It forms dimeric complexes. Binds multiple chlorophylls. PSII binds additional chlorophylls, carotenoids and specific lipids. is required as a cofactor.

The protein resides in the plastid. The protein localises to the chloroplast thylakoid membrane. Its function is as follows. One of the components of the core complex of photosystem II (PSII). It binds chlorophyll and helps catalyze the primary light-induced photochemical processes of PSII. PSII is a light-driven water:plastoquinone oxidoreductase, using light energy to abstract electrons from H(2)O, generating O(2) and a proton gradient subsequently used for ATP formation. This chain is Photosystem II CP47 reaction center protein, found in Oryza nivara (Indian wild rice).